Here is an 83-residue protein sequence, read N- to C-terminus: MSGSTGERSFADIITSIRYWVIHSITIPSLFIAGWLFVSTGLAYDVFGSPRPNEYFTESRQGIPLITGRFDPLEQLDEFSRSF.

The helical transmembrane segment at V21–W35 threads the bilayer. H23 is a heme binding site.

It belongs to the PsbE/PsbF family. As to quaternary structure, heterodimer of an alpha subunit and a beta subunit. PSII is composed of 1 copy each of membrane proteins PsbA, PsbB, PsbC, PsbD, PsbE, PsbF, PsbH, PsbI, PsbJ, PsbK, PsbL, PsbM, PsbT, PsbX, PsbY, PsbZ, Psb30/Ycf12, at least 3 peripheral proteins of the oxygen-evolving complex and a large number of cofactors. It forms dimeric complexes. Heme b is required as a cofactor.

The protein resides in the plastid. It localises to the chloroplast thylakoid membrane. In terms of biological role, this b-type cytochrome is tightly associated with the reaction center of photosystem II (PSII). PSII is a light-driven water:plastoquinone oxidoreductase that uses light energy to abstract electrons from H(2)O, generating O(2) and a proton gradient subsequently used for ATP formation. It consists of a core antenna complex that captures photons, and an electron transfer chain that converts photonic excitation into a charge separation. The sequence is that of Cytochrome b559 subunit alpha from Piper cenocladum (Ant piper).